The primary structure comprises 571 residues: Proline--tRNA ligase (571 aa).

It belongs to the class-II aminoacyl-tRNA synthetase family. ProS type 1 subfamily. As to quaternary structure, homodimer.

Its subcellular location is the cytoplasm. The enzyme catalyses tRNA(Pro) + L-proline + ATP = L-prolyl-tRNA(Pro) + AMP + diphosphate. In terms of biological role, catalyzes the attachment of proline to tRNA(Pro) in a two-step reaction: proline is first activated by ATP to form Pro-AMP and then transferred to the acceptor end of tRNA(Pro). As ProRS can inadvertently accommodate and process non-cognate amino acids such as alanine and cysteine, to avoid such errors it has two additional distinct editing activities against alanine. One activity is designated as 'pretransfer' editing and involves the tRNA(Pro)-independent hydrolysis of activated Ala-AMP. The other activity is designated 'posttransfer' editing and involves deacylation of mischarged Ala-tRNA(Pro). The misacylated Cys-tRNA(Pro) is not edited by ProRS. This chain is Proline--tRNA ligase, found in Pseudomonas aeruginosa (strain UCBPP-PA14).